The sequence spans 98 residues: Cell division topological specificity factor (98 aa).

Belongs to the MinE family.

In terms of biological role, prevents the cell division inhibition by proteins MinC and MinD at internal division sites while permitting inhibition at polar sites. This ensures cell division at the proper site by restricting the formation of a division septum at the midpoint of the long axis of the cell. The chain is Cell division topological specificity factor from Moorella thermoacetica (strain ATCC 39073 / JCM 9320).